The primary structure comprises 315 residues: Prephenate dehydratase (315 aa).

Residues 3–189 (RIAYLGPEGT…ARTRFLLIGV (187 aa)) form the Prephenate dehydratase domain. The region spanning 203–280 (SAVLRIANVP…ADVRYLGSWP (78 aa)) is the ACT domain.

In terms of assembly, homodimer.

The catalysed reaction is prephenate + H(+) = 3-phenylpyruvate + CO2 + H2O. Its pathway is amino-acid biosynthesis; L-phenylalanine biosynthesis; phenylpyruvate from prephenate: step 1/1. This is Prephenate dehydratase (pheA) from Mycobacterium ulcerans (strain Agy99).